The sequence spans 77 residues: Small VCP/p97-interacting protein (77 aa).

Residues 1–77 (MGLCFPCPAE…TAGGLRWTVS (77 aa)) are disordered. Gly2 carries N-myristoyl glycine lipidation. Residues Cys4 and Cys7 are each lipidated (S-palmitoyl cysteine). A compositionally biased stretch (basic and acidic residues) spans 18–37 (PEEKREKLAEAAERRQKEAA). Positions 21–33 (KREKLAEAAERRQ) are VCP/p97-interacting motif (VIM). Residue Ser46 is modified to Phosphoserine.

Belongs to the SVIP family. As to quaternary structure, interacts (via VIM motif) with VCP/p97. Forms a complex with VCP/p97 and DERL1. Highly expressed in the medulla spinalis, adrenal gland, cerebrum, cerebellum, and sciatic nerve.

It localises to the membrane. Its subcellular location is the smooth endoplasmic reticulum membrane. The protein localises to the golgi apparatus membrane. It is found in the cell membrane. The protein resides in the lysosome membrane. In terms of biological role, negative regulator of the ER-associated degradation pathway (ERAD) of misfolded proteins. It competes with AMFR/gp78 for binding VCP/p97, and inhibits AMFR/gp78-VCP/p97 complex formation that is required for degradation of ERAD substrates. Involved in the regulation of adrenal cortisol and dehydroepiandrosterone (DHEA) biosynthesis. This is Small VCP/p97-interacting protein (Svip) from Mus musculus (Mouse).